A 78-amino-acid chain; its full sequence is Large ribosomal subunit protein bL28 (78 aa).

Positions M1–W29 are disordered.

This sequence belongs to the bacterial ribosomal protein bL28 family.

This is Large ribosomal subunit protein bL28 from Corynebacterium glutamicum (strain ATCC 13032 / DSM 20300 / JCM 1318 / BCRC 11384 / CCUG 27702 / LMG 3730 / NBRC 12168 / NCIMB 10025 / NRRL B-2784 / 534).